Reading from the N-terminus, the 605-residue chain is Apoptosis-inducing factor 3 (605 aa).

A compositionally biased stretch (basic and acidic residues) spans 18 to 29 (VLPEKERGKEEL). The interval 18–44 (VLPEKERGKEELSASGKGSPRGYQGNG) is disordered. One can recognise a Rieske domain in the interval 70-165 (ATVCHVKDLE…VKIEKEKVTI (96 aa)). [2Fe-2S] cluster-binding residues include Cys109, His111, Cys128, and His131. FAD contacts are provided by residues 201–205 (GAGAA), Arg235, Lys240, Val270, Asp467, and Trp514.

Belongs to the FAD-dependent oxidoreductase family.

It localises to the mitochondrion. Induces apoptosis through a caspase dependent pathway. Reduces mitochondrial membrane potential. The protein is Apoptosis-inducing factor 3 (Aifm3) of Mus musculus (Mouse).